The sequence spans 200 residues: Recombination protein RecR (200 aa).

The C4-type zinc finger occupies 57–72 (CERCRNYAQSTLCPVC). Residues 80 to 175 (SLVCIVATPG…GVSRIAQGVP (96 aa)) form the Toprim domain.

This sequence belongs to the RecR family.

May play a role in DNA repair. It seems to be involved in an RecBC-independent recombinational process of DNA repair. It may act with RecF and RecO. The sequence is that of Recombination protein RecR from Alcanivorax borkumensis (strain ATCC 700651 / DSM 11573 / NCIMB 13689 / SK2).